Consider the following 389-residue polypeptide: Endonuclease 8-like 1 (389 aa).

The active-site Schiff-base intermediate with DNA is P2. The Proton donor role is filled by E3. K54 serves as the catalytic Proton donor; for beta-elimination activity. A DNA-binding site is contributed by N176. Residues 278 to 389 (TIWFQGDPGP…PREAGESSAS (112 aa)) form a disordered region. The segment covering 322-333 (SRMRRARKHPPK) has biased composition (basic residues). The span at 336-351 (AQQSEGAGLQQNQETP) shows a compositional bias: polar residues. A compositionally biased stretch (basic residues) spans 357 to 373 (GKRRGQRASTGHRRRPK). The span at 374 to 389 (TIPDTRPREAGESSAS) shows a compositional bias: basic and acidic residues.

Belongs to the FPG family. In terms of tissue distribution, detected in heart, spleen and lung.

The protein resides in the cytoplasm. Its subcellular location is the cytoskeleton. The protein localises to the microtubule organizing center. It is found in the centrosome. It localises to the nucleus. The protein resides in the chromosome. The enzyme catalyses 2'-deoxyribonucleotide-(2'-deoxyribose 5'-phosphate)-2'-deoxyribonucleotide-DNA = a 3'-end 2'-deoxyribonucleotide-(2,3-dehydro-2,3-deoxyribose 5'-phosphate)-DNA + a 5'-end 5'-phospho-2'-deoxyribonucleoside-DNA + H(+). In terms of biological role, involved in base excision repair of DNA damaged by oxidation or by mutagenic agents. Acts as a DNA glycosylase that recognizes and removes damaged bases. Has a preference for oxidized pyrimidines, such as thymine glycol, formamidopyrimidine (Fapy) and 5-hydroxyuracil. Has marginal activity towards 8-oxoguanine. Has AP (apurinic/apyrimidinic) lyase activity and introduces nicks in the DNA strand. Cleaves the DNA backbone by beta-delta elimination to generate a single-strand break at the site of the removed base with both 3'- and 5'-phosphates. Has DNA glycosylase/lyase activity towards mismatched uracil and thymine, in particular in U:C and T:C mismatches. Specifically binds 5-hydroxymethylcytosine (5hmC), suggesting that it acts as a specific reader of 5hmC. The sequence is that of Endonuclease 8-like 1 (Neil1) from Mus musculus (Mouse).